A 282-amino-acid chain; its full sequence is Exo-glucosaminidase LytG (282 aa).

Residues 1–29 form the signal peptide; it reads MARKKLKKRKLLISLFFLVSIPLALFVLA. A GW domain is found at 203–281; sequence SLKSVDLNAS…DDSAVEIKEA (79 aa).

Belongs to the glycosyl hydrolase 73 family. Mg(2+) is required as a cofactor.

The protein resides in the secreted. The protein localises to the cell wall. With respect to regulation, inhibited by EDTA. Functionally, is the major glucosaminidase responsible for peptidoglycan structural determination during vegetative growth. Catalyzes the hydrolysis of 1,4-beta-linkages between N-acetyl-D-glucosamine and N-acetylmuramic acid residues in peptidoglycan. Acts processively from the ends of the glycan strands. Also plays a role in motility, chemotaxis and cell division. The chain is Exo-glucosaminidase LytG (lytG) from Bacillus subtilis (strain 168).